We begin with the raw amino-acid sequence, 190 residues long: Elongation factor P (190 aa).

Belongs to the elongation factor P family.

The protein resides in the cytoplasm. It functions in the pathway protein biosynthesis; polypeptide chain elongation. Involved in peptide bond synthesis. Stimulates efficient translation and peptide-bond synthesis on native or reconstituted 70S ribosomes in vitro. Probably functions indirectly by altering the affinity of the ribosome for aminoacyl-tRNA, thus increasing their reactivity as acceptors for peptidyl transferase. The chain is Elongation factor P from Hyphomonas neptunium (strain ATCC 15444).